A 284-amino-acid chain; its full sequence is Bifunctional protein FolD 1 (284 aa).

Residues 166–168 (GAS) and Ile232 contribute to the NADP(+) site.

It belongs to the tetrahydrofolate dehydrogenase/cyclohydrolase family. Homodimer.

It carries out the reaction (6R)-5,10-methylene-5,6,7,8-tetrahydrofolate + NADP(+) = (6R)-5,10-methenyltetrahydrofolate + NADPH. The enzyme catalyses (6R)-5,10-methenyltetrahydrofolate + H2O = (6R)-10-formyltetrahydrofolate + H(+). Its pathway is one-carbon metabolism; tetrahydrofolate interconversion. Its function is as follows. Catalyzes the oxidation of 5,10-methylenetetrahydrofolate to 5,10-methenyltetrahydrofolate and then the hydrolysis of 5,10-methenyltetrahydrofolate to 10-formyltetrahydrofolate. In Pseudomonas syringae pv. syringae (strain B728a), this protein is Bifunctional protein FolD 1.